A 206-amino-acid polypeptide reads, in one-letter code: ATP phosphoribosyltransferase (206 aa).

It belongs to the ATP phosphoribosyltransferase family. Short subfamily. In terms of assembly, heteromultimer composed of HisG and HisZ subunits.

The protein localises to the cytoplasm. It carries out the reaction 1-(5-phospho-beta-D-ribosyl)-ATP + diphosphate = 5-phospho-alpha-D-ribose 1-diphosphate + ATP. It functions in the pathway amino-acid biosynthesis; L-histidine biosynthesis; L-histidine from 5-phospho-alpha-D-ribose 1-diphosphate: step 1/9. Functionally, catalyzes the condensation of ATP and 5-phosphoribose 1-diphosphate to form N'-(5'-phosphoribosyl)-ATP (PR-ATP). Has a crucial role in the pathway because the rate of histidine biosynthesis seems to be controlled primarily by regulation of HisG enzymatic activity. This Campylobacter curvus (strain 525.92) protein is ATP phosphoribosyltransferase.